Here is a 325-residue protein sequence, read N- to C-terminus: Tagatose 1,6-diphosphate aldolase 1 (325 aa).

The protein belongs to the aldolase LacD family.

It carries out the reaction D-tagatofuranose 1,6-bisphosphate = D-glyceraldehyde 3-phosphate + dihydroxyacetone phosphate. The protein operates within carbohydrate metabolism; D-tagatose 6-phosphate degradation; D-glyceraldehyde 3-phosphate and glycerone phosphate from D-tagatose 6-phosphate: step 2/2. In Enterococcus faecalis (strain ATCC 700802 / V583), this protein is Tagatose 1,6-diphosphate aldolase 1 (lacD1).